Consider the following 504-residue polypeptide: Cytochrome P450 6B6 (504 aa).

Cys-445 is a binding site for heme.

It belongs to the cytochrome P450 family. The cofactor is heme.

It localises to the endoplasmic reticulum membrane. The protein resides in the microsome membrane. It catalyses the reaction an organic molecule + reduced [NADPH--hemoprotein reductase] + O2 = an alcohol + oxidized [NADPH--hemoprotein reductase] + H2O + H(+). This chain is Cytochrome P450 6B6 (CYP6B6), found in Helicoverpa armigera (Cotton bollworm).